Here is a 534-residue protein sequence, read N- to C-terminus: GMP synthase [glutamine-hydrolyzing] (534 aa).

In terms of domain architecture, Glutamine amidotransferase type-1 spans 20–210 (PVLVIDFGAQ…LLVGAGCRPS (191 aa)). Catalysis depends on Cys-97, which acts as the Nucleophile. Residues His-184 and Glu-186 contribute to the active site. Positions 211-408 (WTMINIVEEA…LGLPEDIVWR (198 aa)) constitute a GMPS ATP-PPase domain. 238-244 (SGGVDSA) contacts ATP.

Homodimer.

The catalysed reaction is XMP + L-glutamine + ATP + H2O = GMP + L-glutamate + AMP + diphosphate + 2 H(+). It functions in the pathway purine metabolism; GMP biosynthesis; GMP from XMP (L-Gln route): step 1/1. Functionally, catalyzes the synthesis of GMP from XMP. The chain is GMP synthase [glutamine-hydrolyzing] from Parafrankia sp. (strain EAN1pec).